We begin with the raw amino-acid sequence, 349 residues long: Glycosyltransferase 8 domain-containing protein 2 (349 aa).

Residues 1 to 6 (MALLRK) lie on the Cytoplasmic side of the membrane. A helical; Signal-anchor for type II membrane protein membrane pass occupies residues 7 to 24 (INQVLLFLLIVTLCVILY). At 25–349 (KKVHKGTVPK…AGIFKLNHHS (325 aa)) the chain is on the lumenal side. Residue asparagine 234 is glycosylated (N-linked (GlcNAc...) asparagine).

Belongs to the glycosyltransferase 8 family.

It localises to the membrane. The polypeptide is Glycosyltransferase 8 domain-containing protein 2 (GLT8D2) (Homo sapiens (Human)).